Here is a 382-residue protein sequence, read N- to C-terminus: Ustilagic acid biosynthesis cluster protein orf2 (382 aa).

Positions methionine 1–proline 20 are enriched in polar residues. The segment at methionine 1 to tyrosine 22 is disordered.

The protein operates within secondary metabolite biosynthesis. Its function is as follows. Part of the gene cluster that mediates the biosynthesis of the glycolipid biosurfactant ustilagic acid (UA). UA is a secreted cellobiose glycolipid that is toxic for many microorganisms and confers biocontrol activity to U.maydis. UA consists of 15,16-dihydroxypalmitic or 2,15,16-trihydroxypalmitic acid, which is O-glycosidically linked to cellobiose at its terminal hydroxyl group. In addition, the cellobiose moiety is acetylated and acylated with a short-chain hydroxy fatty acid. UA biosynthesis starts with omega-hydroxylation of palmitic acid catalyzed by the cytochrome P450 monooxygenase cyp1. Terminal hydroxylation of palmitic acid precedes subterminal hydroxylation catalyzed by the cytochrome P450 monooxygenase cyp2. Sequential glucosylation of the hydroxy fatty acid is probably catalyzed by the glycosyltransferase ugt1. The cellobiose lipid is further decorated by acetylation of the proximal glucose residue and by acylation with a short-chain beta-hydroxy fatty acid at the distal glucose residue. The acyltransferase uat1 may be a good candidate for catalyzing either acetylation or acylation of the cellobiose lipid. The fatty acid synthase fas2 may be involved in synthesis of the carbon backbone of the short-chain beta-hydroxy fatty acid esterified to the cellobiose disaccharide. The secreted UA consists of a mixture of both alpha-hydroxylated and non-hydroxylated glycolipids; therefore, alpha-hydroxylation of the long-chain fatty, catalyzed by the fatty acid hydroxylase ahd1, occurs late in UA biosynthesis and may be the last step before secretion. This chain is Ustilagic acid biosynthesis cluster protein orf2, found in Mycosarcoma maydis (Corn smut fungus).